The sequence spans 170 residues: Cathelicidin antimicrobial peptide (170 aa).

The first 30 residues, Met1–Ala30, serve as a signal peptide directing secretion. Residues Gln31 to Arg131 constitute a propeptide, cathelin-like domain (CLD). Disulfide bonds link Cys86-Cys97 and Cys108-Cys125. Positions Leu150 to Gly162 are active core.

The protein belongs to the cathelicidin family. In terms of assembly, monomer, homodimer or homotrimer (in vitro). Oligomerizes as tetra- or hexamer in solution (in vitro). Proteolytically cleaved by proteinase PRTN3 into antibacterial peptide LL-37. Proteolytically cleaved by cathepsin CTSG and neutrophil elastase ELANE. Post-translationally, resistant to proteolytic degradation in solution, and when bound to both zwitterionic (mimicking mammalian membranes) and negatively charged membranes (mimicking bacterial membranes). In terms of processing, after secretion onto the skin surface, the CAMP gene product is processed by a serine protease-dependent mechanism into multiple novel antimicrobial peptides distinct from and shorter than cathelicidin LL-37. These peptides show enhanced antimicrobial action, acquiring the ability to kill skin pathogens such as S.aureus, E.coli and C.albicans. These peptides have lost the ability to stimulate CXCL8/IL8 release from keratinocytes. The peptides act synergistically, killing bacteria at lower concentrations when present together, and maintain activity at increased salt condition.

Its subcellular location is the secreted. It localises to the vesicle. Functionally, antimicrobial protein that is an integral component of the innate immune system. Binds to bacterial lipopolysaccharides (LPS). Acts via neutrophil N-formyl peptide receptors to enhance the release of CXCL2. Postsecretory processing generates multiple cathelicidin antimicrobial peptides with various lengths which act as a topical antimicrobial defense in sweat on skin. The unprocessed precursor form, cathelicidin antimicrobial peptide, inhibits the growth of Gram-negative E.coli and E.aerogenes with efficiencies comparable to that of the mature peptide LL-37 (in vitro). Its function is as follows. Antimicrobial peptide that is an integral component of the innate immune system. Binds to bacterial lipopolysaccharides (LPS). Causes membrane permeabilization by forming transmembrane pores (in vitro). Causes lysis of E.coli. Exhibits antimicrobial activity against Gram-negative bacteria such as P.aeruginosa, S.typhimurium, E.aerogenes, E.coli and P.syringae, Gram-positive bacteria such as L.monocytogenes, S.epidermidis, S.pyogenes and S.aureus, as well as vancomycin-resistant enterococci (in vitro). Exhibits antimicrobial activity against methicillin-resistant S.aureus, P.mirabilis, and C.albicans in low-salt media, but not in media containing 100 mM NaCl (in vitro). Forms chiral supramolecular assemblies with quinolone signal (PQS) molecules of P.aeruginosa, which may lead to interference of bacterial quorum signaling and perturbance of bacterial biofilm formation. May form supramolecular fiber-like assemblies on bacterial membranes. Induces cytokine and chemokine producation as well as TNF/TNFA and CSF2/GMCSF production in normal human keratinocytes. Exhibits hemolytic activity against red blood cells. Exhibits antimicrobial activity against E.coli and B.megaterium (in vitro). This Trachypithecus obscurus (Dusky leaf-monkey) protein is Cathelicidin antimicrobial peptide.